A 255-amino-acid chain; its full sequence is Ribonuclease HII (255 aa).

The RNase H type-2 domain occupies 70–255 (EYIAGVDEVG…FEPVKKILLK (186 aa)). A divalent metal cation is bound by residues D76, E77, and D168.

The protein belongs to the RNase HII family. Requires Mn(2+) as cofactor. It depends on Mg(2+) as a cofactor.

It localises to the cytoplasm. The enzyme catalyses Endonucleolytic cleavage to 5'-phosphomonoester.. In terms of biological role, endonuclease that specifically degrades the RNA of RNA-DNA hybrids. The sequence is that of Ribonuclease HII from Ligilactobacillus salivarius (strain UCC118) (Lactobacillus salivarius).